We begin with the raw amino-acid sequence, 194 residues long: uncharacterized protein (194 aa).

Residues 17–37 traverse the membrane as a helical segment; the sequence is DVWLYLLVFGCLSVLVLVLVH.

It belongs to the IIV-6 307L family.

It localises to the membrane. This is an uncharacterized protein from Invertebrate iridescent virus 3 (IIV-3).